The following is a 576-amino-acid chain: Sodium/hydrogen exchanger 8 (576 aa).

The next 11 membrane-spanning stretches (helical) occupy residues 55-75, 79-99, 118-138, 151-171, 186-206, 256-276, 306-326, 349-369, 374-394, 412-432, and 446-466; these read MTIFFSLLVLAICIILVHLLI, LHFLPESVAVVSLGILMGAVI, PNMFFLLLLPPIIFESGYSLH, LFAVFGTAISAFVVGGGIYFL, FAFGSLISAVDPVATIAIFNA, LGYFLKMFFGSAALGTLTGLI, GLAEGISLSGIMAILFSGIVM, VAFLCETCVFAFLGLSIFSFP, ISFVIWCIVLVLFGRAVNIFP, MFIMWFSGLRGAIPYALSLHL, and TTIVIVLFTILLLGGSTMPLI. Thr505 is subject to Phosphothreonine. Residues Ser566 and Ser568 each carry the phosphoserine modification.

It belongs to the monovalent cation:proton antiporter 1 (CPA1) transporter (TC 2.A.36) family. In terms of tissue distribution, predominantly expressed in the liver, skeletal muscle, kidney, and testis. Expressed in both renal cortex and medulla. Detected throughout the entire gastrointestinal tract, with high expression detected in stomach, duodenum and ascending colon. In gastric epithelium; expressed in the glands within the fundus and pylorus regions.

It localises to the golgi apparatus membrane. The protein localises to the golgi apparatus. It is found in the trans-Golgi network membrane. The protein resides in the endosome. Its subcellular location is the multivesicular body membrane. It localises to the apical cell membrane. The protein localises to the cytoplasmic vesicle. It is found in the secretory vesicle. The protein resides in the acrosome. The enzyme catalyses Na(+)(in) + H(+)(out) = Na(+)(out) + H(+)(in). Na(+)/H(+) antiporter. Mediates the electoneutral exchange of intracellular H(+) ions for extracellular Na(+) in 1:1 stoichiometry. Acts as an Na(+)/H(+) exchanger in the trans-Golgi. Contributes to the regulation of pH regulation of Golgi apparatus, and consequently, in protein trafficking and endosomal morphology. Plays a crucial role in germ cells in acrosome biogenesis and sperm development, probably by playing a role in the fusion of the Golgi-derived vesicles that form the acrosomal cap. Can also be active at the cell surface of specialized cells. In the small intestine, plays a major physiological role in transepithelial absorption of Na(+). Regulates intracellular pH homeostasis of intestinal epithelial cells. Acts as an important regulator of mucosal integrity in the intestine and in the stomach, could mediate the pH fluctuation necessary for mucin exocytosis or assist membrane trafficking of other proteins. Plays a role in photoreceptor survival and in the maintenance of intracellular pH homeostasis in retinal pigment epithelium (RPE cells). This Mus musculus (Mouse) protein is Sodium/hydrogen exchanger 8 (Slc9a8).